The sequence spans 968 residues: RNA polymerase-associated protein RapA (968 aa).

Residues 163–332 form the Helicase ATP-binding domain; sequence EVGRRYAPRV…FARLRLLDPD (170 aa). Position 176 to 183 (176 to 183) interacts with ATP; sequence DEVGLGKT. The DEAH box signature appears at 278–281; the sequence is DEAH. Positions 491 to 641 constitute a Helicase C-terminal domain; the sequence is RVDWLIAFLK…AFELTCPSGH (151 aa).

Belongs to the SNF2/RAD54 helicase family. RapA subfamily. In terms of assembly, interacts with the RNAP. Has a higher affinity for the core RNAP than for the holoenzyme. Its ATPase activity is stimulated by binding to RNAP.

Its function is as follows. Transcription regulator that activates transcription by stimulating RNA polymerase (RNAP) recycling in case of stress conditions such as supercoiled DNA or high salt concentrations. Probably acts by releasing the RNAP, when it is trapped or immobilized on tightly supercoiled DNA. Does not activate transcription on linear DNA. Probably not involved in DNA repair. This is RNA polymerase-associated protein RapA from Shewanella denitrificans (strain OS217 / ATCC BAA-1090 / DSM 15013).